Consider the following 2997-residue polypeptide: Chromodomain-helicase-DNA-binding protein 7 (2997 aa).

The interval 86 to 144 is disordered; the sequence is PNRMMSNTPGNGLASPHSQYHTPPVPQVPHGGSGGGQMGVYPGMQNERHGQSFVDSSSM. Over residues 88–106 the composition is skewed to polar residues; that stretch reads RMMSNTPGNGLASPHSQYH. Arg148 is modified (omega-N-methylarginine). Disordered stretches follow at residues 160 to 186, 199 to 287, 375 to 419, 498 to 816, and 938 to 959; these read YQQQQPQPQPPQPAPSGPPAQGHPQHM, SMQQ…AVRP, QMNT…GSAG, GQQH…KQKE, and REPETERVERPPADDWKKSESS. Residues 166–177 are compositionally biased toward pro residues; that stretch reads QPQPPQPAPSGP. Polar residues-rich tracts occupy residues 199-224 and 238-255; these read SMQQHGQPQQRMSQFSQGQEGLNQGN and VPQQSPSMAPSLRHSVQQ. Position 286 is an asymmetric dimethylarginine (Arg286). Residues 375–390 show a composition bias toward polar residues; that stretch reads QMNTQTMHPSQPQGTY. Residues 498 to 510 show a composition bias toward low complexity; sequence GQQHPGQQPSFQQ. Over residues 607 to 620 the composition is skewed to basic and acidic residues; sequence VAEDPSKGFGKDDF. The span at 627–636 shows a compositional bias: polar residues; it reads QELNRNSLDG. Phosphoserine is present on Ser637. Basic and acidic residues-rich tracts occupy residues 650–682 and 717–729; these read KKDPKEPKEPKEKKEPKEPKTPKAPKIPKEPKE and GKTEGSENSDLDK. Phosphoserine is present on Ser725. Over residues 746–758 the composition is skewed to basic residues; the sequence is QKRRSSRQVKRKR. Basic and acidic residues predominate over residues 759-769; it reads YTEDLEFKISD. Polar residues predominate over residues 782–794; that stretch reads SPSNTSQSEQQES. 2 Chromo domains span residues 800–867 and 882–947; these read PVVE…GQNK and VEVD…RVER. The region spanning 980–1154 is the Helicase ATP-binding domain; the sequence is LFNWYNMRNC…FSLLHFLEPS (175 aa). 993–1000 is a binding site for ATP; that stretch reads DEMGLGKT. The DEAH box signature appears at 1105-1108; that stretch reads DEAH. In terms of domain architecture, Helicase C-terminal spans 1294 to 1464; sequence LIDKLLPKLK…LSKKEIEDLL (171 aa). Disordered stretches follow at residues 1576–1600 and 1837–1863; these read FSDLESDSEEKPCAKPRRPQDKSQG and DMLADGGDGGEFDREDEDPEYKPTRTP. Residues Ser1577 and Ser1581 each carry the phosphoserine modification. Positions 1584–1596 are enriched in basic and acidic residues; sequence EEKPCAKPRRPQD. A compositionally biased stretch (acidic residues) spans 1844-1855; the sequence is DGGEFDREDEDP. Ser1874 is subject to Phosphoserine. Basic and acidic residues-rich tracts occupy residues 2170-2189 and 2198-2207; these read QAEGKVEEPENPAAKEKCEG and GSGKESKQEC. A disordered region spans residues 2170–2290; it reads QAEGKVEEPE…DETRDGFYME (121 aa). Ser2231, Ser2233, Ser2237, Ser2251, Ser2272, Ser2275, Ser2356, and Ser2395 each carry phosphoserine. Residues 2237 to 2251 are compositionally biased toward acidic residues; the sequence is SEEDEEEKLEDDDKS. Residues 2401 to 2431 are a coiled coil; the sequence is RRRRRKIEIEAERAAKRRNLMEMVAQLRESQ. Thr2472 carries the post-translational modification Phosphothreonine. A phosphoserine mark is found at Ser2533 and Ser2535. Position 2551 is a phosphothreonine (Thr2551). 2 positions are modified to phosphoserine: Ser2559 and Ser2619. A compositionally biased stretch (low complexity) spans 2823–2832; sequence ATGNTTTASS. 2 disordered regions span residues 2823–2872 and 2935–2997; these read ATGN…SANG and EEKA…ENDE. Composition is skewed to basic and acidic residues over residues 2839–2849 and 2935–2951; these read STSKGEEKGNE and EEKAADKAEGGPFKDGE. Ser2956 and Ser2961 each carry phosphoserine. Acidic residues predominate over residues 2970–2997; the sequence is LLEDEIAQGEELDSLDGGDEIENNENDE.

Belongs to the SNF2/RAD54 helicase family. May interact with CTCF. Interacts with CHD8. Interacts with FAM124B. Found in a complex composed of AGO2, CHD7 and ARB2A. Interacts with TLK2. As to expression, widely expressed in fetal and adult tissues.

It localises to the nucleus. The protein localises to the nucleolus. The enzyme catalyses ATP + H2O = ADP + phosphate + H(+). In terms of biological role, ATP-dependent chromatin-remodeling factor, slides nucleosomes along DNA; nucleosome sliding requires ATP. Probable transcription regulator. May be involved in the in 45S precursor rRNA production. The sequence is that of Chromodomain-helicase-DNA-binding protein 7 (CHD7) from Homo sapiens (Human).